The primary structure comprises 229 residues: Histidine biosynthesis bifunctional protein HisIE (229 aa).

Residues M1–V127 form a phosphoribosyl-AMP cyclohydrolase region. The phosphoribosyl-ATP pyrophosphohydrolase stretch occupies residues V128–S229.

The protein in the N-terminal section; belongs to the PRA-CH family. In the C-terminal section; belongs to the PRA-PH family.

The protein resides in the cytoplasm. The enzyme catalyses 1-(5-phospho-beta-D-ribosyl)-ATP + H2O = 1-(5-phospho-beta-D-ribosyl)-5'-AMP + diphosphate + H(+). It catalyses the reaction 1-(5-phospho-beta-D-ribosyl)-5'-AMP + H2O = 1-(5-phospho-beta-D-ribosyl)-5-[(5-phospho-beta-D-ribosylamino)methylideneamino]imidazole-4-carboxamide. The protein operates within amino-acid biosynthesis; L-histidine biosynthesis; L-histidine from 5-phospho-alpha-D-ribose 1-diphosphate: step 2/9. Its pathway is amino-acid biosynthesis; L-histidine biosynthesis; L-histidine from 5-phospho-alpha-D-ribose 1-diphosphate: step 3/9. The chain is Histidine biosynthesis bifunctional protein HisIE from Wolinella succinogenes (strain ATCC 29543 / DSM 1740 / CCUG 13145 / JCM 31913 / LMG 7466 / NCTC 11488 / FDC 602W) (Vibrio succinogenes).